Here is an 822-residue protein sequence, read N- to C-terminus: Putative endoplasmic reticulum metallopeptidase 1 (822 aa).

The Cytoplasmic portion of the chain corresponds to 1–14; sequence MVLVCASSSKCKRN. A helical membrane pass occupies residues 15-35; it reads TFLQLAMVLFAVVMARIALYF. Over 36-365 the chain is Lumenal; that stretch reads HNHLDEPLVD…FNSLFFMYSK (330 aa). Asn-146 carries N-linked (GlcNAc...) asparagine glycosylation. His-161 and Asp-173 together coordinate Zn(2+). The active-site Proton acceptor is the Glu-207. Glu-208 and Glu-234 together coordinate Zn(2+). N-linked (GlcNAc...) asparagine glycosylation occurs at Asn-291. Residue His-307 coordinates Zn(2+). Residues 366 to 384 traverse the membrane as a helical segment; sequence LTSKILNTLVGGLGILLTL. The Cytoplasmic portion of the chain corresponds to 385–392; sequence RGSEGSFT. A helical membrane pass occupies residues 393-413; the sequence is VALIAQVISIAGIFVIPNIWA. The Lumenal portion of the chain corresponds to 414–431; sequence YILGNVLDCGMSWFRNEY. A helical transmembrane segment spans residues 432–452; that stretch reads WPLFIYLPAIFASLFFTESLF. The Cytoplasmic segment spans residues 453 to 463; sequence KRSEHLALRAT. The helical transmembrane segment at 464–484 threads the bilayer; sequence IFIFSLLTFIPLPSAYLFTII. Position 485 (Asp-485) is a topological domain, lumenal. A helical membrane pass occupies residues 486–506; it reads FFMVFALFLNDKILAKPGTVH. Topologically, residues 507 to 514 are cytoplasmic; that stretch reads PLTYFIGS. The helical transmembrane segment at 515 to 535 threads the bilayer; that stretch reads IGAMTVGFESAINLLEIFVPL. Residues 536–547 lie on the Lumenal side of the membrane; that stretch reads TGRIGTDKVADN. The chain crosses the membrane as a helical span at residues 548–568; the sequence is VVATVCVCGFNIYFPLMSPWI. The Cytoplasmic segment spans residues 569 to 575; sequence QRFRSRC. A helical transmembrane segment spans residues 576-596; that stretch reads CFRLGLLFSIFVVGFSSFILA. The Lumenal segment spans residues 597-822; that stretch reads KQDTYYDSLH…GVVSGNFKLE (226 aa). Residues Asn-617, Asn-682, Asn-706, and Asn-758 are each glycosylated (N-linked (GlcNAc...) asparagine).

It belongs to the peptidase M28 family. M28B subfamily. The cofactor is Zn(2+).

The protein resides in the endoplasmic reticulum membrane. This Schizosaccharomyces pombe (strain 972 / ATCC 24843) (Fission yeast) protein is Putative endoplasmic reticulum metallopeptidase 1.